We begin with the raw amino-acid sequence, 282 residues long: Pantothenate synthetase (282 aa).

Position 31 to 38 (31 to 38) interacts with ATP; the sequence is MGYLHEGH. The active-site Proton donor is the His-38. Gln-62 serves as a coordination point for (R)-pantoate. Gln-62 provides a ligand contact to beta-alanine. Residue 148 to 151 participates in ATP binding; sequence GEKD. Gln-154 provides a ligand contact to (R)-pantoate. Residues Val-177 and 185–188 contribute to the ATP site; that span reads YSSR.

Belongs to the pantothenate synthetase family. Homodimer.

The protein localises to the cytoplasm. The catalysed reaction is (R)-pantoate + beta-alanine + ATP = (R)-pantothenate + AMP + diphosphate + H(+). It participates in cofactor biosynthesis; (R)-pantothenate biosynthesis; (R)-pantothenate from (R)-pantoate and beta-alanine: step 1/1. Its function is as follows. Catalyzes the condensation of pantoate with beta-alanine in an ATP-dependent reaction via a pantoyl-adenylate intermediate. The sequence is that of Pantothenate synthetase from Aquifex aeolicus (strain VF5).